The following is a 453-amino-acid chain: uncharacterized protein (453 aa).

Residues 5-63 (LLKKNQSVELTIEDLTHDGSGVGKIDGYPLFIPNALPGEKITAKITKLNKNYGFARMEN) enclose the TRAM domain. Positions 76, 82, 85, and 162 each coordinate [4Fe-4S] cluster. S-adenosyl-L-methionine is bound by residues glutamine 285, tyrosine 314, glutamate 335, and aspartate 383. The active-site Nucleophile is the cysteine 410.

Belongs to the class I-like SAM-binding methyltransferase superfamily. RNA M5U methyltransferase family.

This is an uncharacterized protein from Listeria innocua serovar 6a (strain ATCC BAA-680 / CLIP 11262).